The chain runs to 143 residues: Large ribosomal subunit protein uL11 (143 aa).

It belongs to the universal ribosomal protein uL11 family. Part of the ribosomal stalk of the 50S ribosomal subunit. Interacts with L10 and the large rRNA to form the base of the stalk. L10 forms an elongated spine to which L12 dimers bind in a sequential fashion forming a multimeric L10(L12)X complex. In terms of processing, one or more lysine residues are methylated.

In terms of biological role, forms part of the ribosomal stalk which helps the ribosome interact with GTP-bound translation factors. The polypeptide is Large ribosomal subunit protein uL11 (Paraburkholderia phymatum (strain DSM 17167 / CIP 108236 / LMG 21445 / STM815) (Burkholderia phymatum)).